Consider the following 463-residue polypeptide: Glutamate--tRNA ligase (463 aa).

Residues 10–20 carry the 'HIGH' region motif; the sequence is PSPTGYLHIGG. The 'KMSKS' region signature appears at 252 to 256; sequence KLSKR. K255 contacts ATP.

It belongs to the class-I aminoacyl-tRNA synthetase family. Glutamate--tRNA ligase type 1 subfamily. As to quaternary structure, monomer.

The protein resides in the cytoplasm. The catalysed reaction is tRNA(Glu) + L-glutamate + ATP = L-glutamyl-tRNA(Glu) + AMP + diphosphate. In terms of biological role, catalyzes the attachment of glutamate to tRNA(Glu) in a two-step reaction: glutamate is first activated by ATP to form Glu-AMP and then transferred to the acceptor end of tRNA(Glu). The chain is Glutamate--tRNA ligase from Mycoplasmopsis agalactiae (strain NCTC 10123 / CIP 59.7 / PG2) (Mycoplasma agalactiae).